The chain runs to 271 residues: MRIALGIEYDGSGFAGWQWQNGKRTIQAEVERALSRVADAPVRVTCAGRTDAGVHAIEQVAHFDTESRRSERSWLLGANTALPEDVRILWVRETEPHFHARLSAIARYYRYEILNRPMRSALRPRQFTWCHAPLDVERMREGAAYLVGEHDFSSFRAQQCQSRSPFRRVHFLHVRREGERVIMEIAANAFVHHMVRNIAGVLMAVGAGKRDPAWVGELLAMRDRAKGGVTAPPDGLYLGGVCYPEEFGLARDAVFEHLPADARRYQPDDES.

Asp51 functions as the Nucleophile in the catalytic mechanism. Tyr109 contacts substrate.

This sequence belongs to the tRNA pseudouridine synthase TruA family. In terms of assembly, homodimer.

It catalyses the reaction uridine(38/39/40) in tRNA = pseudouridine(38/39/40) in tRNA. Functionally, formation of pseudouridine at positions 38, 39 and 40 in the anticodon stem and loop of transfer RNAs. This is tRNA pseudouridine synthase A from Methylococcus capsulatus (strain ATCC 33009 / NCIMB 11132 / Bath).